A 412-amino-acid chain; its full sequence is Allantoate amidohydrolase (412 aa).

His84, Asp95, Glu130, and His193 together coordinate Zn(2+). Residues Arg218, Asn278, and Arg291 each contribute to the allantoate site. His385 contributes to the Zn(2+) binding site.

Belongs to the peptidase M20 family. Homodimer. The cofactor is Zn(2+).

It is found in the cytoplasm. The enzyme catalyses allantoate + H2O + 2 H(+) = (S)-2-ureidoglycine + NH4(+) + CO2. It participates in nitrogen metabolism; (S)-allantoin degradation. Functionally, involved in the anaerobic nitrogen utilization via the assimilation of allantoin. Catalyzes specifically the hydrolysis of allantoate to yield CO2, NH3 and S-ureidoglycine, which is unstable and readily undergoes a second deamination by S-ureidoglycine aminohydrolase AllE to yield S-ureidoglycolate and NH3. The sequence is that of Allantoate amidohydrolase from Bacillus subtilis (strain 168).